Consider the following 452-residue polypeptide: mRNA export factor ICP27 homolog (452 aa).

Positions 42–164 (EAIGSTPGED…RNDQTHDESY (123 aa)) are disordered. Residues 98 to 107 (SNHHGGRDVE) show a composition bias toward basic and acidic residues. Residues 129 to 144 (SRKHRDRSLSNRRRRP) show a composition bias toward basic residues. Residues 154–164 (ERNDQTHDESY) show a composition bias toward basic and acidic residues. 4 residues coordinate Zn(2+): C335, H417, C421, and C426. The CHC2-type zinc finger occupies 335–426 (CLLLNRDNDL…HQRECGRVEC (92 aa)).

The protein belongs to the HHV-1 ICP27 protein family. Homodimer. Homodimerization is required for transactivation. Associates in a complex with RNA, and host export factors NXF1/TAP and ALYREF; these interactions allow nuclear export of viral transcripts. Interacts with three host shuttling SR proteins SRSF1, SRSF3 and SRSF7. Interacts with host SRPK1. Interacts with IE62; this interaction enhances IE62 transactivation. Post-translationally, phosphorylated in vitro by SRPK1.

The protein resides in the host cytoplasm. Its subcellular location is the host nucleus. Functionally, multifunctional regulator of the expression of viral genes that mediates nuclear export of viral intronless mRNAs. This immediate early (EI) protein promotes the nuclear export of viral intronless mRNAs by interacting with mRNAs and host NXF1/TAP. The sequence is that of mRNA export factor ICP27 homolog from Varicella-zoster virus (strain Dumas) (HHV-3).